We begin with the raw amino-acid sequence, 673 residues long: MSTHSNDYFSASSGMVSETSSEVSSINSSQPVSFSKASIAAPVPCSDLHSTKSNDASRKLSISRTLTNRLNDIKKAVDDDNLQTEENSADVNKILESRFDVADAIRLQHNESVQSKLNIPVTHTTTAGASLSAPSSSAFSASSIQNDTTEHKASMDSKLMRNRLYPASTKHSGKDLEAQGITEFEPDEPTVKKVFTNKSTGQLELPPDGGYGWVVTFCVFLTMFSTWGCNASFGVDLAYYLNHDTYPGASKYDYALIAGLTVFLGQLLSPLVMALMRIIGLRTTMLFGDAVMLAAYLLASFTTKLWQLYVTQGFMVGCSISLIFVPATTVLPGWFLKKRAVAMGVSLLGTGAGGVVYGLATNKMLSDFGNTRWCLRIIGISCSISVLVAIALLKERNPTPAIGLKSPRAMFEQLKAMFSLKVITKPFVVLIALWFMFALFAYNMMVFTLSSYAISKGLSSHDASTLTAILNGSQSIGRPLMGLAGDKFGRANVTIVLTTLLTIYMFAFWIPAHTFVQLIFFSILVGSCVGVANVMNTVLIADMVKPEEFLPAWAFVNYCGAPFLLVCEVIAQALTVEKDKSNPYLHAQIFCGCCFIAALILISILREYSIRMKLTERQAMTNEKLKEWKASEYDTDSADEDWGKLKERKTKYDLLLGPGIKKYFLRMVYPMKV.

At 1 to 208 (MSTHSNDYFS…STGQLELPPD (208 aa)) the chain is on the cytoplasmic side. Serine 57, serine 112, and serine 172 each carry phosphoserine. A helical transmembrane segment spans residues 209–229 (GGYGWVVTFCVFLTMFSTWGC). Asparagine 230 carries N-linked (GlcNAc...) asparagine glycosylation. Topologically, residues 230–255 (NASFGVDLAYYLNHDTYPGASKYDYA) are lumenal. A helical membrane pass occupies residues 256–276 (LIAGLTVFLGQLLSPLVMALM). A topological domain (cytoplasmic) is located at residue arginine 277. The helical transmembrane segment at 278-298 (IIGLRTTMLFGDAVMLAAYLL) threads the bilayer. Over 299–315 (ASFTTKLWQLYVTQGFM) the chain is Lumenal. The helical transmembrane segment at 316–336 (VGCSISLIFVPATTVLPGWFL) threads the bilayer. Over 337–339 (KKR) the chain is Cytoplasmic. A helical membrane pass occupies residues 340-360 (AVAMGVSLLGTGAGGVVYGLA). Residues 361–372 (TNKMLSDFGNTR) are Lumenal-facing. The helical transmembrane segment at 373–393 (WCLRIIGISCSISVLVAIALL) threads the bilayer. The Cytoplasmic segment spans residues 394–426 (KERNPTPAIGLKSPRAMFEQLKAMFSLKVITKP). Residues 427–447 (FVVLIALWFMFALFAYNMMVF) form a helical membrane-spanning segment. Over 448–504 (TLSSYAISKGLSSHDASTLTAILNGSQSIGRPLMGLAGDKFGRANVTIVLTTLLTIY) the chain is Lumenal. N-linked (GlcNAc...) asparagine glycosylation is found at asparagine 471 and asparagine 492. The chain crosses the membrane as a helical span at residues 505–525 (MFAFWIPAHTFVQLIFFSILV). Residues 526 to 549 (GSCVGVANVMNTVLIADMVKPEEF) lie on the Cytoplasmic side of the membrane. The helical transmembrane segment at 550-570 (LPAWAFVNYCGAPFLLVCEVI) threads the bilayer. Topologically, residues 571-584 (AQALTVEKDKSNPY) are lumenal. The chain crosses the membrane as a helical span at residues 585–605 (LHAQIFCGCCFIAALILISIL). Topologically, residues 606–673 (REYSIRMKLT…FLRMVYPMKV (68 aa)) are cytoplasmic. A Phosphoserine modification is found at serine 637.

It belongs to the major facilitator superfamily. Monocarboxylate porter (TC 2.A.1.13) family.

The protein resides in the endoplasmic reticulum membrane. This is an uncharacterized protein from Saccharomyces cerevisiae (strain ATCC 204508 / S288c) (Baker's yeast).